Reading from the N-terminus, the 682-residue chain is Transcription factor 12 (682 aa).

Residues 19 to 27 (DLLDFSAMF) carry the 9aaTAD motif. Disordered stretches follow at residues 25–122 (AMFS…LYSR), 140–219 (LGSP…PPTS), and 281–313 (SVSPTDINTSLPPMSSFHRGSTSSSPYVAASHT). 2 stretches are compositionally biased toward polar residues: residues 30–48 (PVNSGKTRPTTLGSSQFSG) and 56–76 (GTTSWGTSGQPSPSYDSSRGF). Phosphoserine is present on residues Ser47, Ser67, and Ser79. The span at 81-93 (HYSDHLNDSRLGA) shows a compositional bias: basic and acidic residues. The residue at position 98 (Ser98) is a Phosphoserine. Polar residues-rich tracts occupy residues 101–121 (PFMNSNLMGKTSERGSFSLYS) and 144–163 (AQLSSSGKPGTAYYSFSATS). Lys110 is covalently cross-linked (Glycyl lysine isopeptide (Lys-Gly) (interchain with G-Cter in SUMO2)). Ser116 is modified (phosphoserine). Residues 119–140 (LYSRDTGLPGCQSSLLRQDLGL) are leucine-zipper. A Glycyl lysine isopeptide (Lys-Gly) (interchain with G-Cter in SUMO2) cross-link involves residue Lys181. Positions 182-196 (KVRKVPPGLPSSVYA) are interaction with RUNX1T1. Polar residues predominate over residues 282–306 (VSPTDINTSLPPMSSFHRGSTSSSP). Thr313 is modified (phosphothreonine). Position 333 is a phosphoserine (Ser333). Disordered regions lie at residues 349-395 (PDHT…SLHS) and 462-580 (SASM…ERRM). Low complexity predominate over residues 352–363 (TSSSFPSNPSTP). Polar residues-rich tracts occupy residues 364 to 376 (VGSPSPLTGTSQW) and 383 to 395 (APSSPSYENSLHS). The span at 481-492 (SVLSSTVTTSST) shows a compositional bias: low complexity. Positions 506–517 (LQSQSGTVVTTE) are enriched in polar residues. 2 stretches are compositionally biased toward basic and acidic residues: residues 518 to 530 (IKTENKEKDENLH) and 536 to 551 (DDMKSDDESSQKDIKV). Residue Lys519 forms a Glycyl lysine isopeptide (Lys-Gly) (interchain with G-Cter in SUMO2) linkage. Ser540 is subject to Phosphoserine. Lys550 is covalently cross-linked (Glycyl lysine isopeptide (Lys-Gly) (interchain with G-Cter in SUMO2)). At Thr557 the chain carries Phosphothreonine. A phosphoserine mark is found at Ser558 and Ser559. Basic and acidic residues predominate over residues 568–580 (PEQKIEREKERRM). The bHLH domain occupies 577-630 (ERRMANNARERLRVRDINEAFKELGRMCQLHLKSEKPQTKLLILHQAVAVILSL). Residues Lys609 and Lys653 each participate in a glycyl lysine isopeptide (Lys-Gly) (interchain with G-Cter in SUMO2) cross-link. A class A specific domain region spans residues 632–655 (QQVRERNLNPKAACLKRREEEKVS). Positions 651–682 (EEKVSAVSAEPPTTLPGTHPGLSETTNPMGHM) are disordered. Positions 661–672 (PPTTLPGTHPGL) are enriched in low complexity. The segment covering 673–682 (SETTNPMGHM) has biased composition (polar residues).

In terms of assembly, efficient DNA binding requires dimerization with another bHLH protein. Forms homo- or heterooligomers with myogenin, E12 and ITF2 proteins. Interacts with PTF1A. Interacts with NEUROD2. Interacts with RUNX1T1. Interacts with AML1-MTG8/ETO (via nervy homology region 2 in oligomerized form). Interacts with BHLHA9. In terms of tissue distribution, expressed in several tissues and cell types including skeletal muscle, thymus, and a B-cell line.

The protein localises to the nucleus. Functionally, transcriptional regulator. Involved in the initiation of neuronal differentiation. Activates transcription by binding to the E box (5'-CANNTG-3'). May be involved in the functional network that regulates the development of the GnRH axis. The chain is Transcription factor 12 (TCF12) from Homo sapiens (Human).